Reading from the N-terminus, the 123-residue chain is Small ribosomal subunit protein uS12cz/uS12cy (123 aa).

Belongs to the universal ribosomal protein uS12 family. In terms of assembly, part of the 30S ribosomal subunit.

Its subcellular location is the plastid. It localises to the chloroplast. Functionally, with S4 and S5 plays an important role in translational accuracy. Located at the interface of the 30S and 50S subunits. The sequence is that of Small ribosomal subunit protein uS12cz/uS12cy (rps12-A) from Atropa belladonna (Belladonna).